The chain runs to 306 residues: tRNA pseudouridine synthase B (306 aa).

Catalysis depends on Asp48, which acts as the Nucleophile.

It belongs to the pseudouridine synthase TruB family. Type 1 subfamily.

The enzyme catalyses uridine(55) in tRNA = pseudouridine(55) in tRNA. Functionally, responsible for synthesis of pseudouridine from uracil-55 in the psi GC loop of transfer RNAs. This chain is tRNA pseudouridine synthase B, found in Haemophilus influenzae (strain PittEE).